The primary structure comprises 252 residues: Imidazole glycerol phosphate synthase subunit HisF (252 aa).

Active-site residues include Asp-11 and Asp-130.

The protein belongs to the HisA/HisF family. As to quaternary structure, heterodimer of HisH and HisF.

It localises to the cytoplasm. The enzyme catalyses 5-[(5-phospho-1-deoxy-D-ribulos-1-ylimino)methylamino]-1-(5-phospho-beta-D-ribosyl)imidazole-4-carboxamide + L-glutamine = D-erythro-1-(imidazol-4-yl)glycerol 3-phosphate + 5-amino-1-(5-phospho-beta-D-ribosyl)imidazole-4-carboxamide + L-glutamate + H(+). The protein operates within amino-acid biosynthesis; L-histidine biosynthesis; L-histidine from 5-phospho-alpha-D-ribose 1-diphosphate: step 5/9. IGPS catalyzes the conversion of PRFAR and glutamine to IGP, AICAR and glutamate. The HisF subunit catalyzes the cyclization activity that produces IGP and AICAR from PRFAR using the ammonia provided by the HisH subunit. The protein is Imidazole glycerol phosphate synthase subunit HisF of Aromatoleum aromaticum (strain DSM 19018 / LMG 30748 / EbN1) (Azoarcus sp. (strain EbN1)).